Here is a 151-residue protein sequence, read N- to C-terminus: Putative membrane protein ORF10 (151 aa).

2 helical membrane-spanning segments follow: residues 7-23 (LCLAFGVTLIVIVGVVV) and 107-123 (GLVAAFNGFWLSFIIMY).

The protein resides in the membrane. In Ictalurid herpesvirus 1 (strain Auburn) (IcHV-1), this protein is Putative membrane protein ORF10 (ORF10).